A 421-amino-acid polypeptide reads, in one-letter code: UDP-N-acetylglucosamine 1-carboxyvinyltransferase (421 aa).

A phosphoenolpyruvate-binding site is contributed by 22–23; that stretch reads KN. A UDP-N-acetyl-alpha-D-glucosamine-binding site is contributed by arginine 94. Cysteine 118 (proton donor) is an active-site residue. At cysteine 118 the chain carries 2-(S-cysteinyl)pyruvic acid O-phosphothioketal. UDP-N-acetyl-alpha-D-glucosamine-binding positions include 123–127, aspartate 308, and isoleucine 330; that span reads RPMDL.

The protein belongs to the EPSP synthase family. MurA subfamily.

It localises to the cytoplasm. It catalyses the reaction phosphoenolpyruvate + UDP-N-acetyl-alpha-D-glucosamine = UDP-N-acetyl-3-O-(1-carboxyvinyl)-alpha-D-glucosamine + phosphate. It functions in the pathway cell wall biogenesis; peptidoglycan biosynthesis. Its function is as follows. Cell wall formation. Adds enolpyruvyl to UDP-N-acetylglucosamine. The chain is UDP-N-acetylglucosamine 1-carboxyvinyltransferase from Ruegeria pomeroyi (strain ATCC 700808 / DSM 15171 / DSS-3) (Silicibacter pomeroyi).